The chain runs to 517 residues: Zinc finger protein AEBP2 (517 aa).

The tract at residues 1–229 (MAAAITDMAD…DSEDSISSTI (229 aa)) is disordered. Residue A2 is modified to N-acetylalanine. 2 positions are modified to phosphoserine: S18 and S24. Over residues 36 to 51 (PEEEEEEEEEEEEAEA) the composition is skewed to acidic residues. The span at 61 to 78 (GGSGGGGGGGGGGVGGGE) shows a compositional bias: gly residues. Over residues 94-121 (GEDEDEEEDDEEEEDESSSSGGGEEESS) the composition is skewed to acidic residues. Low complexity predominate over residues 122 to 150 (AESLVGSSGGSSSDETRSLSPGAASSSSG). Position 141 is a phosphoserine (S141). Residues 152–163 (GDGKEGLEEPKG) are compositionally biased toward basic and acidic residues. Gly residues-rich tracts occupy residues 166–175 (GSQGGGGGGS) and 185–196 (GDEGYGTGGGGS). Residues S206, S210, and S211 each carry the phosphoserine modification. Residues 209 to 294 (MSSDGEPLSR…IHVDGQRGGV (86 aa)) form an interaction with RBBP4 region. The segment at 261–286 (YNCCWDQCQACFNSSPDLADHIRSIH) adopts a C2H2-type 1 zinc-finger fold. The segment at 300–322 (KGCKVYNTPSTSQSWLQRHMLTH) adopts a C2H2-type 2; degenerate zinc-finger fold. The C2H2-type 3 zinc-finger motif lies at 328 to 352 (FKCVVGGCNASFASQGGLARHVPTH). Polar residues predominate over residues 352 to 365 (HFSQQNSSKVSSQP). The interval 352–394 (HFSQQNSSKVSSQPKAKEESPSKAGMNKRRKLKNKRRRSLPRP) is disordered. Residues 377-392 (MNKRRKLKNKRRRSLP) are compositionally biased toward basic residues. The residue at position 390 (S390) is a Phosphoserine. Residues 407-478 (RHRAICFNLS…QLKTKVVHLS (72 aa)) are interaction with SUZ12. The important for nucleosome binding activity of the PRC2 complex stretch occupies residues 495–517 (TMPQKRLKRTLIRKVFNLYLSKQ).

It belongs to the AEBP2/jing C2H2-type zinc-finger family. Self-associates. Associates with the PRC2 complex, which consists of the core components EED, EZH1 or EZH2, SUZ12, and RBBP4, and various combinations of accessory subunits including AEBP2, JARID2, PHF19, MTF2 and EPOP. Found in a monomeric PRC2.2 (class 2) complex consisting of at least SUZ12, RBBP4, AEBP2 and JARID2. Within the PRC2 complex, interacts directly with SUZ12; competes with PHF19 for SUZ12 binding. Interacts with EED, EZH2, and RBBP4. May also interact with RBBP7.

The protein localises to the nucleus. In terms of biological role, acts as an accessory subunit for the core Polycomb repressive complex 2 (PRC2), which mediates histone H3K27 (H3K27me3) trimethylation on chromatin leading to transcriptional repression of the affected target gene. Plays a role in nucleosome localization of the PRC2 complex. The chain is Zinc finger protein AEBP2 (AEBP2) from Homo sapiens (Human).